The primary structure comprises 711 residues: Protein Smaug homolog 1 (711 aa).

S168 carries the post-translational modification Phosphoserine. Residues A278 to S323 form a disordered region. An SAM domain is found at S323–E396. The residue at position 420 (S420) is a Phosphoserine. Disordered stretches follow at residues S422–A448 and N565–N588. T424 is modified (phosphothreonine). R566 bears the Omega-N-methylarginine mark. Over residues F568–G581 the composition is skewed to polar residues. S573 is modified (phosphoserine).

This sequence belongs to the SMAUG family. Expressed in brain (at protein level).

It is found in the cytoplasm. The protein localises to the cell projection. It localises to the dendrite. Its subcellular location is the synapse. The protein resides in the synaptosome. Its function is as follows. Acts as a translational repressor of SRE-containing messengers. The sequence is that of Protein Smaug homolog 1 (Samd4a) from Mus musculus (Mouse).